Here is a 567-residue protein sequence, read N- to C-terminus: Type II secretion system protein E (567 aa).

325–332 (GPTGSGKT) serves as a coordination point for ATP.

The protein belongs to the GSP E family. In terms of assembly, forms homooligomers; most probably hexamers. Interacts with XpsL/GspL.

Its subcellular location is the cell inner membrane. The enzyme catalyses ATP + H2O + cellular proteinSide 1 = ADP + phosphate + cellular proteinSide 2.. Its function is as follows. ATPase component of the type II secretion system required for the energy-dependent secretion of extracellular factors such as proteases and toxins from the periplasm. Acts as a molecular motor to provide the energy that is required for assembly of the pseudopilus and the extrusion of substrates generated in the cytoplasm. In Xanthomonas campestris pv. campestris (strain ATCC 33913 / DSM 3586 / NCPPB 528 / LMG 568 / P 25), this protein is Type II secretion system protein E (xpsE).